The sequence spans 282 residues: ATP phosphoribosyltransferase (282 aa).

It belongs to the ATP phosphoribosyltransferase family. Long subfamily. Mg(2+) serves as cofactor.

Its subcellular location is the cytoplasm. The catalysed reaction is 1-(5-phospho-beta-D-ribosyl)-ATP + diphosphate = 5-phospho-alpha-D-ribose 1-diphosphate + ATP. It participates in amino-acid biosynthesis; L-histidine biosynthesis; L-histidine from 5-phospho-alpha-D-ribose 1-diphosphate: step 1/9. Its activity is regulated as follows. Feedback inhibited by histidine. Its function is as follows. Catalyzes the condensation of ATP and 5-phosphoribose 1-diphosphate to form N'-(5'-phosphoribosyl)-ATP (PR-ATP). Has a crucial role in the pathway because the rate of histidine biosynthesis seems to be controlled primarily by regulation of HisG enzymatic activity. The sequence is that of ATP phosphoribosyltransferase from Pyrobaculum aerophilum (strain ATCC 51768 / DSM 7523 / JCM 9630 / CIP 104966 / NBRC 100827 / IM2).